We begin with the raw amino-acid sequence, 158 residues long: Large ribosomal subunit protein eL24 (158 aa).

The segment covering 98-146 (LDASHKKAEAEKAVRELKQKKANDIEKKRADRKLQGKDVKAAKKAETKK) has biased composition (basic and acidic residues). Residues 98–158 (LDASHKKAEA…QPVGAKGGKK (61 aa)) are disordered.

This sequence belongs to the eukaryotic ribosomal protein eL24 family.

The sequence is that of Large ribosomal subunit protein eL24 (RPL24) from Tetrahymena thermophila (strain SB210).